Consider the following 508-residue polypeptide: Steroid 17-alpha-hydroxylase/17,20 lyase (508 aa).

N202 contacts substrate. C442 serves as a coordination point for heme.

It belongs to the cytochrome P450 family. Heme serves as cofactor.

It localises to the endoplasmic reticulum membrane. It is found in the microsome membrane. The catalysed reaction is a C21-steroid + reduced [NADPH--hemoprotein reductase] + O2 = a 17alpha-hydroxy-C21-steroid + oxidized [NADPH--hemoprotein reductase] + H2O + H(+). It carries out the reaction progesterone + reduced [NADPH--hemoprotein reductase] + O2 = 17alpha-hydroxyprogesterone + oxidized [NADPH--hemoprotein reductase] + H2O + H(+). The enzyme catalyses pregnenolone + reduced [NADPH--hemoprotein reductase] + O2 = 17alpha-hydroxypregnenolone + oxidized [NADPH--hemoprotein reductase] + H2O + H(+). It catalyses the reaction 17alpha-hydroxypregnenolone + reduced [NADPH--hemoprotein reductase] + O2 = 3beta-hydroxyandrost-5-en-17-one + acetate + oxidized [NADPH--hemoprotein reductase] + H2O + 2 H(+). It functions in the pathway steroid hormone biosynthesis. The protein operates within steroid biosynthesis; glucocorticoid biosynthesis. Its activity is regulated as follows. Regulated predominantly by intracellular cAMP levels. The 17,20-lyase activity is stimulated by cytochrome b5, which acts as an allosteric effector increasing the Vmax of the lyase activity. In terms of biological role, a cytochrome P450 monooxygenase involved in corticoid and androgen biosynthesis. Catalyzes 17-alpha hydroxylation of C21 steroids, which is common for both pathways. A second oxidative step, required only for androgen synthesis, involves an acyl-carbon cleavage. Hydroxylates pregnenolone to form 17-alpha pregnenolone, followed by the cleavage of the C17-C20 bond to form dehydroepiandrosterone (DHEA). Has 17-alpha hydroxylase activity toward progesterone. The 17-alpha hydroxy intermediates, as part of adrenal glucocorticoids biosynthesis pathway, are precursors of cortisol. Mechanistically, uses molecular oxygen inserting one oxygen atom into a substrate, and reducing the second into a water molecule, with two electrons provided by NADPH via cytochrome P450 reductase (CPR; NADPH-ferrihemoprotein reductase). The protein is Steroid 17-alpha-hydroxylase/17,20 lyase (CYP17A1) of Papio hamadryas ursinus (Chacma baboon).